Consider the following 829-residue polypeptide: uncharacterized protein (829 aa).

Belongs to the IIV-6 050L family.

This is an uncharacterized protein from Invertebrate iridescent virus 3 (IIV-3).